Here is a 359-residue protein sequence, read N- to C-terminus: MNIYDQLQSLEDRYEELGELLSDPEVVSDTKRFMELSKEEANTRETVATYRQYKDIIQSISDAEEMIKESGGDPEIEEMAKEELKESKVAKEDYEEKLKILLLPKDPNDDKNIILEIRGAAGGDEAALFAGDLLDMYQRFAESQGWRFEVMEASYNGVGGIKEVVAMVSGQSVYSKLKYESGAHRVQRVPVTESQGRVHTSTATVLVMPEIEDVEYDIDPKDLRIDIYHASGAGGQNVNKVATAVRIVHLPTNIKVEMQEERTQQKNRDKAMKIIRARVADHFAQIAQDEQDAERKSTIGTGDRSERIRTYNFPQNRVTDHRIGLTLQKLDTILSGKMDEVIDALVMYDQTQKLETLNQ.

The residue at position 236 (Gln236) is an N5-methylglutamine. The disordered stretch occupies residues 288–308; the sequence is QDEQDAERKSTIGTGDRSERI. Positions 293–308 are enriched in basic and acidic residues; it reads AERKSTIGTGDRSERI.

The protein belongs to the prokaryotic/mitochondrial release factor family. Methylated by PrmC. Methylation increases the termination efficiency of RF1.

Its subcellular location is the cytoplasm. In terms of biological role, peptide chain release factor 1 directs the termination of translation in response to the peptide chain termination codons UAG and UAA. The sequence is that of Peptide chain release factor 1 from Streptococcus uberis (strain ATCC BAA-854 / 0140J).